The sequence spans 459 residues: Adenylosuccinate synthetase isozyme 1 C (459 aa).

The tract at residues 1–31 (MSFSWSAKDHKSYTNPPSNPTQGLKRPRNDT) is disordered. A compositionally biased stretch (polar residues) spans 13-22 (YTNPPSNPTQ). GTP is bound by residues 44–50 (GDEGKGK) and 72–74 (GHT). D45 functions as the Proton acceptor in the catalytic mechanism. The Mg(2+) site is built by D45 and G72. D45 lines the substrate pocket. IMP is bound by residues 45 to 48 (DEGK), 70 to 73 (NAGH), T165, R179, N258, T273, and R337. H73 acts as the Proton donor in catalysis. 333 to 339 (VTTGRKR) is a substrate binding site. Residues R339, 365 to 367 (KLD), and 447 to 450 (GVGK) each bind GTP.

It belongs to the adenylosuccinate synthetase family. In terms of assembly, homodimer. Mg(2+) serves as cofactor.

It is found in the cytoplasm. The enzyme catalyses IMP + L-aspartate + GTP = N(6)-(1,2-dicarboxyethyl)-AMP + GDP + phosphate + 2 H(+). The protein operates within purine metabolism; AMP biosynthesis via de novo pathway; AMP from IMP: step 1/2. Component of the purine nucleotide cycle (PNC), which interconverts IMP and AMP to regulate the nucleotide levels in various tissues, and which contributes to glycolysis and ammoniagenesis. Catalyzes the first committed step in the biosynthesis of AMP from IMP. The chain is Adenylosuccinate synthetase isozyme 1 C (adss1c) from Salmo salar (Atlantic salmon).